A 224-amino-acid chain; its full sequence is Perchlorate reductase assembly chaperone protein (224 aa).

The protein belongs to the type II DMSO reductase enzyme chaperone family.

The protein localises to the cytoplasm. In terms of biological role, may function as a system-specific molybdenum chaperone protein essential for the assembly of the perchlorate reductase PcrAB complex prior to its periplasmic translocation via the Tat pathway. The sequence is that of Perchlorate reductase assembly chaperone protein (pcrD) from Dechloromonas aromatica (strain RCB).